Here is a 251-residue protein sequence, read N- to C-terminus: Hydroxyacylglutathione hydrolase (251 aa).

Residues His53, His55, Asp57, His58, His110, Asp127, and His165 each contribute to the Zn(2+) site.

It belongs to the metallo-beta-lactamase superfamily. Glyoxalase II family. Monomer. It depends on Zn(2+) as a cofactor.

The enzyme catalyses an S-(2-hydroxyacyl)glutathione + H2O = a 2-hydroxy carboxylate + glutathione + H(+). The protein operates within secondary metabolite metabolism; methylglyoxal degradation; (R)-lactate from methylglyoxal: step 2/2. Thiolesterase that catalyzes the hydrolysis of S-D-lactoyl-glutathione to form glutathione and D-lactic acid. The protein is Hydroxyacylglutathione hydrolase of Salmonella gallinarum (strain 287/91 / NCTC 13346).